A 178-amino-acid polypeptide reads, in one-letter code: Large ribosomal subunit protein uL6 (178 aa).

The protein belongs to the universal ribosomal protein uL6 family. Part of the 50S ribosomal subunit.

Functionally, this protein binds to the 23S rRNA, and is important in its secondary structure. It is located near the subunit interface in the base of the L7/L12 stalk, and near the tRNA binding site of the peptidyltransferase center. This chain is Large ribosomal subunit protein uL6, found in Streptococcus pneumoniae (strain 70585).